The primary structure comprises 136 residues: Glutaredoxin-C7 (136 aa).

Positions 29–135 (LLRIESLASE…PLLKDAGALW (107 aa)) constitute a Glutaredoxin domain. Residues C49 and C52 are joined by a disulfide bond. The Responsive for interaction with TGA factors signature appears at 133-136 (ALWL).

It belongs to the glutaredoxin family. CC-type subfamily. In terms of assembly, interacts with TGA2, TGA3, TGA7 and PAN. Interacts with TGA9 and TGA10 in the nucleus. Highly expressed in inflorescences, roots, and siliques. Expressed at lower levels in mature flowers.

It is found in the cytoplasm. The protein resides in the nucleus. Functionally, has a glutathione-disulfide oxidoreductase activity in the presence of NADPH and glutathione reductase. Reduces low molecular weight disulfides and proteins. Involved in flower development as a regulator of petal primorida initiation and further petal morphogenesis. May mediate post-translational modifications of target proteins required for normal petal organ initiation and morphogenesis. ROXY1/TGA protein interactions can occur in vivo and support their biological relevance in petal development. May be involved in the regulation of the floral regulator class C gene AG (AGAMOUS). The chain is Glutaredoxin-C7 (GRXC7) from Arabidopsis thaliana (Mouse-ear cress).